A 440-amino-acid chain; its full sequence is Lysine histidine transporter-like 6 (440 aa).

Over residues 1–10 the composition is skewed to polar residues; it reads MVSSSPVSPS. Positions 1–25 are disordered; it reads MVSSSPVSPSKETDRKSGEKWTAED. The Cytoplasmic portion of the chain corresponds to 1-31; sequence MVSSSPVSPSKETDRKSGEKWTAEDPSRPAK. Basic and acidic residues predominate over residues 11-25; it reads KETDRKSGEKWTAED. A helical transmembrane segment spans residues 32 to 51; it reads WWYSTFHTVTAMIGAGVLSL. Residues 52–61 lie on the Extracellular side of the membrane; that stretch reads PYAMAYLGWG. Residues 62–82 form a helical membrane-spanning segment; the sequence is PGTFVLAMTWGLTLNTMWQMV. Topologically, residues 83-109 are cytoplasmic; sequence QLHECVPGTRFDRYIDLGRYAFGPKLG. A helical transmembrane segment spans residues 110-130; that stretch reads PWIVLPQQLIVQVGCNIVYMV. The Extracellular segment spans residues 131-152; sequence TGGKCLKQFVEITCSTCTPVRQ. A helical membrane pass occupies residues 153–173; the sequence is SYWILGFGGVHFILSQLPNFN. Residue S174 is a topological domain, cytoplasmic. The helical transmembrane segment at 175-195 threads the bilayer; the sequence is VAGVSLAAAVMSLCYSTIAWG. Residues 196–221 lie on the Extracellular side of the membrane; the sequence is GSIAHGRVPDVSYDYKATNPGDFTFR. A helical transmembrane segment spans residues 222-242; it reads VFNALGQISFAFAGHAVALEI. The Cytoplasmic portion of the chain corresponds to 243–261; the sequence is QATMPSTPERPSKVPMWQG. A helical transmembrane segment spans residues 262 to 282; that stretch reads VIGAYVVNAVCYFPVALICYW. Residues 283 to 300 lie on the Extracellular side of the membrane; sequence AFGQDVDDNVLMNLQRPA. The helical transmembrane segment at 301-321 threads the bilayer; it reads WLIAAANLMVVVHVIGSYQVF. Over 322 to 353 the chain is Cytoplasmic; the sequence is AMPVFDLLERMMVNKFGFKHGVVLRFFTRTIY. 2 helical membrane passes run 354–374 and 375–395; these read VAFT…LGFF and GGFG…LIIK. The Cytoplasmic portion of the chain corresponds to 396 to 399; that stretch reads KPRR. A helical membrane pass occupies residues 400–420; it reads FSVTWFVNWISIIVGVFIMLA. The Extracellular portion of the chain corresponds to 421–440; it reads STIGGLRNIIADSSTYSFYA.

It belongs to the amino acid/polyamine transporter 2 family. Amino acid/auxin permease (AAAP) (TC 2.A.18.2) subfamily.

It is found in the cell membrane. Its function is as follows. Amino acid transporter. The polypeptide is Lysine histidine transporter-like 6 (Arabidopsis thaliana (Mouse-ear cress)).